The following is a 539-amino-acid chain: UDP-N-acetylmuramate--L-alanine ligase (539 aa).

165–171 (GTHGKTT) lines the ATP pocket.

The protein belongs to the MurCDEF family.

It localises to the cytoplasm. It catalyses the reaction UDP-N-acetyl-alpha-D-muramate + L-alanine + ATP = UDP-N-acetyl-alpha-D-muramoyl-L-alanine + ADP + phosphate + H(+). It functions in the pathway cell wall biogenesis; peptidoglycan biosynthesis. In terms of biological role, cell wall formation. This Trichodesmium erythraeum (strain IMS101) protein is UDP-N-acetylmuramate--L-alanine ligase.